A 187-amino-acid polypeptide reads, in one-letter code: Elongation factor P (187 aa).

It belongs to the elongation factor P family.

The protein localises to the cytoplasm. It participates in protein biosynthesis; polypeptide chain elongation. In terms of biological role, involved in peptide bond synthesis. Stimulates efficient translation and peptide-bond synthesis on native or reconstituted 70S ribosomes in vitro. Probably functions indirectly by altering the affinity of the ribosome for aminoacyl-tRNA, thus increasing their reactivity as acceptors for peptidyl transferase. In Bifidobacterium animalis subsp. lactis (strain AD011), this protein is Elongation factor P.